We begin with the raw amino-acid sequence, 86 residues long: Antimicrobial peptide 2 (86 aa).

A signal peptide spans 1-25 (MVNMKCVALIVIVMMAFMMVDPSMG). Intrachain disulfides connect Cys29-Cys40, Cys34-Cys46, and Cys39-Cys53. The region spanning 29–53 (CVRGRCPSGMCCSQFGYCGKGPKYC) is the Chitin-binding type-1 domain. A propeptide spans 56 to 86 (ASTTVDHQADVAATKTAKNPTDAKLAGAGSP) (removed in mature form).

In terms of assembly, homodimer.

Chitin-binding protein with a defensive function against numerous chitin containing fungal pathogens. It is also a potent inhibitor of Gram-positive bacteria. The chain is Antimicrobial peptide 2 from Amaranthus caudatus (Love-lies-bleeding).